The primary structure comprises 398 residues: GATA transcription factor 21 (398 aa).

The tract at residues 20-51 is disordered; sequence QPFFYPLGSSSSLHHHHHHHHHQVPSNSSSSS. The segment covering 32 to 42 has biased composition (basic residues); sequence LHHHHHHHHHQ. Positions 109 to 116 match the Nuclear localization signal motif; it reads PKKETRLK. The tract at residues 122 to 144 is disordered; it reads KDHEDQPHPLHQNPTKPDSDSDK. The segment at 226–280 adopts a GATA-type zinc-finger fold; sequence NGVIRVCSDCNTTKTPLWRSGPRGPKSLCNACGIRQRKARRAAMAAAAAAGDQEV. The tract at residues 289–353 is disordered; the sequence is LPLKKKLQNK…KSTTSSNSSI (65 aa). The span at 291–302 shows a compositional bias: basic residues; that stretch reads LKKKLQNKKKRS. The segment covering 343–353 has biased composition (low complexity); that stretch reads SKSTTSSNSSI.

Belongs to the type IV zinc-finger family. Class B subfamily. As to quaternary structure, interacts with SNL1. Forms heterodimers with GATA18. In terms of tissue distribution, expressed predominantly in leaves, and barely in stems, flowers and siliques.

The protein resides in the nucleus. Its function is as follows. Transcriptional regulator that specifically binds 5'-GATA-3' or 5'-GAT-3' motifs within gene promoters. Involved in the modulation of chloroplast development, growth and division in a cytokinin-dependent manner. Repressor of the gibberellic acid (GA) signaling pathway that represses flowering and modulates greening, in a SOC1-dependent manner. Prevents the accumulation of SOC1 during flowering. Promotes chlorophyll biosynthesis throughout the plant, by regulating chlorophyll biosynthetic genes (e.g. HEMA1 and GUN4) and chloroplast localized glutamate synthase (e.g. GLU1). Involved in the regulation of sugar-sensing genes (e.g. HXK1, HXK2, STP13 and PLT6). Regulator of germination, senescence, elongation growth and flowering time. Also influences leaf starch content. The sequence is that of GATA transcription factor 21 from Arabidopsis thaliana (Mouse-ear cress).